The following is a 715-amino-acid chain: Protein MTSS 2 (715 aa).

Positions 1-249 (METAEKECGA…EQVIKDLKGS (249 aa)) constitute an IMD domain. Residues 134–156 (HEIKKKSSDTLKLQKKARKGKGD) adopt a coiled-coil conformation. Low complexity-rich tracts occupy residues 253-274 (WSYQ…SMCS), 284-295 (SSVSSHDSGFVS), and 312-330 (TSQK…TCQS). 3 disordered regions span residues 253–405 (WSYQ…EVSP), 420–485 (LEHQ…RNSN), and 527–562 (IRRT…PTVP). Residue Thr257 is modified to Phosphothreonine. Ser261 bears the Phosphoserine mark. Residues 331 to 341 (VSECSSPTSDW) show a composition bias toward polar residues. Residues 360–369 (DRVEHLRDTE) are compositionally biased toward basic and acidic residues. At Ser404 the chain carries Phosphoserine. Residues 429-442 (SLQYSSGYSTQTTT) are compositionally biased toward low complexity. The segment covering 443 to 455 (PSCSEDTIPSQGS) has biased composition (polar residues). Phosphoserine is present on residues Ser542, Ser564, Ser575, Ser587, Ser597, and Ser602. Phosphothreonine is present on Thr606. The interval 661–690 (FPFPTALSATPSEETPTPPPAATSDPPAED) is disordered. In terms of domain architecture, WH2 spans 687–704 (PAEDMLVAIRRGVRLRRT).

It belongs to the MTSS family. As to quaternary structure, interacts (via IMD domain) with RAC1; this interaction may be important to potentiate PDGF-induced RAC1 activation.

The protein resides in the cytoplasm. It is found in the cell projection. Its subcellular location is the ruffle. Involved in plasma membrane dynamics. Potentiated PDGF-mediated formation of membrane ruffles and lamellipodia in fibroblasts, acting via RAC1 activation. May function in actin bundling. This chain is Protein MTSS 2 (Mtss2), found in Mus musculus (Mouse).